The sequence spans 313 residues: Dioxygenase swnH2 (313 aa).

Residues H155, D157, and H232 each coordinate Fe cation.

This sequence belongs to the PhyH family. In terms of assembly, homodimer. Fe cation is required as a cofactor.

The protein operates within mycotoxin biosynthesis. Aminotransferase; part of the gene cluster that mediates the biosynthesis of swainsonine (SW), a cytotoxic fungal alkaloid and a potential cancer therapy drug. Swainsonine production occurs via a multibranched pathway and is dispensable for fungal colonization of plants and infection of insect hosts. The first step of swainsonine biosynthesis is the production of the precursor pipecolic acid (PA) via conversion of L-lysine (Lys) to 1-piperideine-6-carboxylate (P6C) by the aminotransferase swnA, the latter being further reduced to PA by the reductase swnR. The PKS-NRPS hybrid synthetase swnK uptakes and condensates PA and malonyl-CoA with and without skipping of the ketoreductase (KR) domain in order to produce 3 intermediates, 1-oxoindolizidine, (1S)-1-hydroxyindolizin, and (1R)-1-hydroxyindolizine; with the transisomer (1S)-1-hydroxyindolizin being predominant. The terminal thioester reductase (TE) domain of swnK is involved in reduction of the thioester bond to release the intermediate aldehydes. The oxidoreductase swnN could contribute to the reduction of 1-oxoindolizidine to (1S)-1-hydroxyindolizin and (1R)-1-hydroxyindolizine, contributing to the major route of SW production. The dioxygenase swnH2 would be responsible for the oxidization of (1R)-1-hydroxyindolizine into (1R,2S)-1,2-dihydroxyindolizine and of (1S)-1-hydroxyindolizin to yield both (1R,2S)-1,2-dihydroxyindolizine and (1S,2S)-1,2-dihydroxyindolizine. The dioxygenase swnH1 then performs the conversion of the 1,2-dihydroxyindolizine epimers to SW. This chain is Dioxygenase swnH2, found in Arthroderma benhamiae (strain ATCC MYA-4681 / CBS 112371) (Trichophyton mentagrophytes).